The chain runs to 489 residues: 5'-AMP-activated protein kinase subunit gamma-3 (489 aa).

The disordered stretch occupies residues 1–95 (MEPELEHTLP…TRQEATFPKA (95 aa)). Residues 32–47 (GENSWPSPAVATSSER) are compositionally biased toward polar residues. 3 CBS domains span residues 197 to 258 (MATS…RSPL), 280 to 340 (CFKP…LLPR), and 355 to 415 (TFRD…HLDM). Residues arginine 225, 240–245 (MLTITD), valine 285, 306–307 (HR), and lysine 325 contribute to the ADP site. AMP contacts are provided by residues arginine 225, 240 to 245 (MLTITD), valine 285, histidine 306, 306 to 307 (HR), lysine 325, threonine 355, alanine 360, 381 to 382 (SA), 397 to 400 (SRFD), arginine 424, leucine 432, histidine 453, 453 to 454 (HR), and 469 to 472 (SLSD). Residues arginine 225, 240-245 (MLTITD), valine 285, 306-307 (HR), arginine 307, and lysine 325 each bind ATP. The AMPK pseudosubstrate motif lies at 293–314 (LFEAVYALIKNRIHRLPVLDPV). ADP-binding positions include 397–400 (SRFD), arginine 424, leucine 432, and 453–454 (HR). ATP is bound by residues 397-400 (SRFD), arginine 424, leucine 432, and 453-454 (HR). Residues 427-486 (CLEGVLSCQPHESLGEVIDRIAREQVHRLVLVDETQHLLGVVSLSDILQALVLSPAGIDA) enclose the CBS 4 domain.

This sequence belongs to the 5'-AMP-activated protein kinase gamma subunit family. AMPK is a heterotrimer of an alpha catalytic subunit (PRKAA1 or PRKAA2), a beta (PRKAB1 or PRKAB2) and a gamma non-catalytic subunits (PRKAG1, PRKAG2 or PRKAG3). Interacts with FNIP1 and FNIP2. Phosphorylated by ULK1; leading to negatively regulate AMPK activity and suggesting the existence of a regulatory feedback loop between ULK1 and AMPK. In terms of processing, glycosylated; O-GlcNAcylated by OGT, promoting the AMP-activated protein kinase (AMPK) activity.

AMP/ATP-binding subunit of AMP-activated protein kinase (AMPK), an energy sensor protein kinase that plays a key role in regulating cellular energy metabolism. In response to reduction of intracellular ATP levels, AMPK activates energy-producing pathways and inhibits energy-consuming processes: inhibits protein, carbohydrate and lipid biosynthesis, as well as cell growth and proliferation. AMPK acts via direct phosphorylation of metabolic enzymes, and by longer-term effects via phosphorylation of transcription regulators. AMPK also acts as a regulator of cellular polarity by remodeling the actin cytoskeleton; probably by indirectly activating myosin. The AMPK gamma3 subunit is a non-catalytic subunit with a regulatory role in muscle energy metabolism. It mediates binding to AMP, ADP and ATP, leading to AMPK activation or inhibition: AMP-binding results in allosteric activation of alpha catalytic subunit (PRKAA1 or PRKAA2) both by inducing phosphorylation and preventing dephosphorylation of catalytic subunits. ADP also stimulates phosphorylation, without stimulating already phosphorylated catalytic subunit. ATP promotes dephosphorylation of catalytic subunit, rendering the AMPK enzyme inactive. The sequence is that of 5'-AMP-activated protein kinase subunit gamma-3 (Prkag3) from Mus musculus (Mouse).